The following is a 96-amino-acid chain: UPF0235 protein VV2877 (96 aa).

The protein belongs to the UPF0235 family.

In Vibrio vulnificus (strain YJ016), this protein is UPF0235 protein VV2877.